Reading from the N-terminus, the 417-residue chain is NADH-quinone oxidoreductase subunit D (417 aa).

It belongs to the complex I 49 kDa subunit family. NDH-1 is composed of 14 different subunits. Subunits NuoB, C, D, E, F, and G constitute the peripheral sector of the complex.

It is found in the cell inner membrane. It carries out the reaction a quinone + NADH + 5 H(+)(in) = a quinol + NAD(+) + 4 H(+)(out). Its function is as follows. NDH-1 shuttles electrons from NADH, via FMN and iron-sulfur (Fe-S) centers, to quinones in the respiratory chain. The immediate electron acceptor for the enzyme in this species is believed to be ubiquinone. Couples the redox reaction to proton translocation (for every two electrons transferred, four hydrogen ions are translocated across the cytoplasmic membrane), and thus conserves the redox energy in a proton gradient. The polypeptide is NADH-quinone oxidoreductase subunit D (Polaromonas sp. (strain JS666 / ATCC BAA-500)).